Consider the following 505-residue polypeptide: Probable alpha-L-arabinofuranosidase C (505 aa).

Asparagine 152, asparagine 269, and asparagine 438 each carry an N-linked (GlcNAc...) asparagine glycan.

Belongs to the glycosyl hydrolase 51 family.

It localises to the secreted. It carries out the reaction Hydrolysis of terminal non-reducing alpha-L-arabinofuranoside residues in alpha-L-arabinosides.. The protein operates within glycan metabolism; L-arabinan degradation. Alpha-L-arabinofuranosidase involved in the degradation of arabinoxylan, a major component of plant hemicellulose. Acts only on small linear 1,5-alpha-linked L-arabinofuranosyl oligosaccharides. In Aspergillus clavatus (strain ATCC 1007 / CBS 513.65 / DSM 816 / NCTC 3887 / NRRL 1 / QM 1276 / 107), this protein is Probable alpha-L-arabinofuranosidase C (abfC).